Consider the following 333-residue polypeptide: Glycerol-3-phosphate dehydrogenase [NAD(P)+] (333 aa).

NADPH contacts are provided by Trp-13, Lys-33, and Lys-108. Residues Lys-108 and Gly-138 each contribute to the sn-glycerol 3-phosphate site. An NADPH-binding site is contributed by Ser-142. Sn-glycerol 3-phosphate is bound by residues Lys-193, Asp-246, Ser-256, Arg-257, and Asn-258. The active-site Proton acceptor is Lys-193. Arg-257 serves as a coordination point for NADPH. NADPH-binding residues include Val-281 and Glu-283.

The protein belongs to the NAD-dependent glycerol-3-phosphate dehydrogenase family.

The protein localises to the cytoplasm. It catalyses the reaction sn-glycerol 3-phosphate + NAD(+) = dihydroxyacetone phosphate + NADH + H(+). It carries out the reaction sn-glycerol 3-phosphate + NADP(+) = dihydroxyacetone phosphate + NADPH + H(+). It functions in the pathway membrane lipid metabolism; glycerophospholipid metabolism. In terms of biological role, catalyzes the reduction of the glycolytic intermediate dihydroxyacetone phosphate (DHAP) to sn-glycerol 3-phosphate (G3P), the key precursor for phospholipid synthesis. The sequence is that of Glycerol-3-phosphate dehydrogenase [NAD(P)+] from Bifidobacterium longum (strain NCC 2705).